We begin with the raw amino-acid sequence, 404 residues long: Argininosuccinate synthase (404 aa).

Residues 10 to 18 and A37 each bind ATP; that span reads AYSGGLDTS. L-citrulline is bound by residues Y90 and S95. G120 lines the ATP pocket. L-aspartate contacts are provided by T122, N126, and D127. An L-citrulline-binding site is contributed by N126. R130, S180, S189, E265, and Y277 together coordinate L-citrulline.

The protein belongs to the argininosuccinate synthase family. Type 1 subfamily. As to quaternary structure, homotetramer.

The protein resides in the cytoplasm. The catalysed reaction is L-citrulline + L-aspartate + ATP = 2-(N(omega)-L-arginino)succinate + AMP + diphosphate + H(+). It functions in the pathway amino-acid biosynthesis; L-arginine biosynthesis; L-arginine from L-ornithine and carbamoyl phosphate: step 2/3. In Helicobacter hepaticus (strain ATCC 51449 / 3B1), this protein is Argininosuccinate synthase.